The primary structure comprises 557 residues: NADP-dependent malic enzyme (557 aa).

The active-site Proton donor is Tyr91. Arg144 lines the NADP(+) pocket. Substrate-binding residues include Arg144 and Lys162. Lys162 acts as the Proton acceptor in catalysis. Residues Glu234 and Asp235 each contribute to the Mn(2+) site. Residue Asn238 participates in NADP(+) binding. A Mn(2+)-binding site is contributed by Asp258. NADP(+)-binding positions include Ala291–Ala294, Ser325, Asn397, and Asn443. Asn443 serves as a coordination point for substrate.

Belongs to the malic enzymes family. In terms of assembly, homotetramer. Requires Mg(2+) as cofactor. It depends on Mn(2+) as a cofactor. In terms of processing, the N-terminus is blocked.

The protein localises to the cytoplasm. The enzyme catalyses (S)-malate + NADP(+) = pyruvate + CO2 + NADPH. The catalysed reaction is oxaloacetate + H(+) = pyruvate + CO2. The protein is NADP-dependent malic enzyme (ME1) of Columba livia (Rock dove).